The primary structure comprises 1403 residues: Centrosomal protein of 162 kDa (1403 aa).

A disordered region spans residues 20 to 46 (LSDDSFENSNKTPRQPNEDNKEMKKKD). The span at 35-46 (PNEDNKEMKKKD) shows a compositional bias: basic and acidic residues. A phosphoserine mark is found at Ser-160 and Ser-163. Disordered stretches follow at residues 169-243 (LHRY…MLAN), 256-292 (VGLS…SSGD), 306-348 (SLGD…ESDL), and 453-606 (NPSL…GGNR). Residues 178-208 (PAEDGCENESEQEELPETYSDDFEDAEDADD) show a composition bias toward acidic residues. The segment covering 210–238 (LITKDEETHPKENSESGKDSFPKQEEEKT) has biased composition (basic and acidic residues). Positions 485–500 (PCKKARSTPSLPKRKP) are enriched in basic residues. 2 stretches are compositionally biased toward basic and acidic residues: residues 526–536 (LEKKTSKDNTK) and 571–585 (PHRE…RPED). The stretch at 614–1124 (KRAQDAEEKW…QKERRMMLSR (511 aa)) forms a coiled coil. Residues 1126–1147 (IPRSREETAAKRLKKDPNRGHG) are disordered. Positions 1128–1144 (RSREETAAKRLKKDPNR) are enriched in basic and acidic residues. The stretch at 1174–1386 (EENYRLRSEL…LDVLRELHRQ (213 aa)) forms a coiled coil.

The protein belongs to the CEP162 family. As to quaternary structure, interacts with CPNE4. Interacts with alpha-tubulin. Interacts with CEP290.

It localises to the cytoplasm. The protein resides in the cytoskeleton. It is found in the microtubule organizing center. The protein localises to the centrosome. Its subcellular location is the centriole. It localises to the spindle. The protein resides in the nucleus. Required to promote assembly of the transition zone in primary cilia. Acts by specifically recognizing and binding the axonemal microtubule. Localizes to the distal ends of centrioles before ciliogenesis and directly binds to axonemal microtubule, thereby promoting and restricting transition zone formation specifically at the cilia base. Required to mediate CEP290 association with microtubules. In Mus musculus (Mouse), this protein is Centrosomal protein of 162 kDa (Cep162).